The following is a 289-amino-acid chain: UPF0276 protein BP2925 (289 aa).

This sequence belongs to the UPF0276 family.

The polypeptide is UPF0276 protein BP2925 (Bordetella pertussis (strain Tohama I / ATCC BAA-589 / NCTC 13251)).